Reading from the N-terminus, the 235-residue chain is 5'-methylthioadenosine/S-adenosylhomocysteine nucleosidase (235 aa).

Glutamate 12 serves as the catalytic Proton acceptor. Residues glycine 78, isoleucine 152, and 173 to 174 (ME) contribute to the substrate site. The Proton donor role is filled by aspartate 197.

The protein belongs to the PNP/UDP phosphorylase family. MtnN subfamily. As to quaternary structure, homodimer.

It carries out the reaction S-adenosyl-L-homocysteine + H2O = S-(5-deoxy-D-ribos-5-yl)-L-homocysteine + adenine. It catalyses the reaction S-methyl-5'-thioadenosine + H2O = 5-(methylsulfanyl)-D-ribose + adenine. The enzyme catalyses 5'-deoxyadenosine + H2O = 5-deoxy-D-ribose + adenine. It functions in the pathway amino-acid biosynthesis; L-methionine biosynthesis via salvage pathway; S-methyl-5-thio-alpha-D-ribose 1-phosphate from S-methyl-5'-thioadenosine (hydrolase route): step 1/2. Functionally, catalyzes the irreversible cleavage of the glycosidic bond in both 5'-methylthioadenosine (MTA) and S-adenosylhomocysteine (SAH/AdoHcy) to adenine and the corresponding thioribose, 5'-methylthioribose and S-ribosylhomocysteine, respectively. Also cleaves 5'-deoxyadenosine, a toxic by-product of radical S-adenosylmethionine (SAM) enzymes, into 5-deoxyribose and adenine. Thus, is required for in vivo function of the radical SAM enzymes biotin synthase and lipoic acid synthase, that are inhibited by 5'-deoxyadenosine accumulation. This chain is 5'-methylthioadenosine/S-adenosylhomocysteine nucleosidase, found in Buchnera aphidicola subsp. Schizaphis graminum (strain Sg).